Reading from the N-terminus, the 113-residue chain is C-C motif chemokine 15 (113 aa).

Residues Met1 to Ala21 form the signal peptide. 3 cysteine pairs are disulfide-bonded: Cys53-Cys77, Cys54-Cys93, and Cys64-Cys104.

Belongs to the intercrine beta (chemokine CC) family. In terms of assembly, monomer. Post-translationally, the N-terminal is proteolytically cleaved by proteases associated with inflammatory responses. The processed forms CCL15(22-92), CCL15(25-92) and CCL15(29-92) exhibit increase in CCR1-mediated signaling and chemotaxis assays in vitro. In terms of tissue distribution, most abundant in heart, skeletal muscle and adrenal gland. Lower levels in placenta, liver, pancreas and bone marrow. CCL15(22-92), CCL15(25-92) and CCL15(29-92) are found in high levels in synovial fluids from rheumatoid patients.

The protein resides in the secreted. Chemotactic factor that attracts T-cells and monocytes, but not neutrophils, eosinophils, or B-cells. Acts mainly via CC chemokine receptor CCR1. Also binds to CCR3. CCL15(22-92), CCL15(25-92) and CCL15(29-92) are more potent chemoattractants than the CCL15. This Homo sapiens (Human) protein is C-C motif chemokine 15 (CCL15).